Here is a 535-residue protein sequence, read N- to C-terminus: MKQSSNVPAFLSKLWTLVEETHTNEFITWSQNGQSFLVLDEQRFAKEILPKYFKHNNMASFVRQLNMYGFRKVVHIESGIIKQERDGPVEFQHPYFKQGQDDLLENIKRKVSSSKPEENKIRQEDLTKIISSAQKVQIKQETIESRLSELKSENESLWKEVSELRAKHAQQQQVIRKIVQFIVTLVQNNQLVSLKRKRPLLLNTNGAPKKNLYQHIVKEPTDNHHHKVPHSRTEGLKSRERISDDIIIYDVTDDNVDEENIPVIPETNEDVVVDSSNQYPDIVIVEDDNEDEYAPVIQSGEQSEPAREPLRVGSAGSSSPLMSSAVQLNGSSSLTSEDPVTMMDSILNDNINLLGKVELLDYLDSIDCSLEDFQAMLSGRQFSIDPDLLVDLFTSSVQMNPTDNIKYTKSENKGLEATKSSVVQHVSEEGRKSKSKPDKQLIQYTAFPLLAFLDGNSASAIEQGSTTASSEVVPSVDKPIEVDELLDSSLDPEPTQSKLVRLEPLTEAEASEATLFYLCELAPAPLDSDMPLLDS.

Glycyl lysine isopeptide (Lys-Gly) (interchain with G-Cter in SUMO2) cross-links involve residues lysine 2, lysine 82, lysine 135, lysine 139, lysine 151, lysine 210, lysine 218, and lysine 237. The DNA-binding element occupies 7-112 (VPAFLSKLWT…LLENIKRKVS (106 aa)). The segment at 119–192 (NKIRQEDLTK…VTLVQNNQLV (74 aa)) is hydrophobic repeat HR-A/B. Residues 298–325 (QSGEQSEPAREPLRVGSAGSSSPLMSSA) form a disordered region. A compositionally biased stretch (low complexity) spans 313–325 (GSAGSSSPLMSSA). The segment at 359 to 384 (LLDYLDSIDCSLEDFQAMLSGRQFSI) is hydrophobic repeat HR-C. The disordered stretch occupies residues 418–437 (TKSSVVQHVSEEGRKSKSKP). Residues 426–437 (VSEEGRKSKSKP) are compositionally biased toward basic and acidic residues.

Belongs to the HSF family. DNA-binding homotrimer in stressed or heat shocked cells, otherwise found as a homodimer. In terms of tissue distribution, isoform alpha is expressed predominantly in testis while isoform beta is expressed predominantly in heart and brain.

The protein localises to the cytoplasm. Its subcellular location is the nucleus. Functionally, DNA-binding protein that specifically binds heat shock promoter elements (HSE) and activates transcription. In higher eukaryotes, HSF is unable to bind to the HSE unless the cells are heat shocked. HSF2 is expressed in a form that binds DNA constitutively but loses DNA binding by incubation at greater than 41 degrees C. The protein is Heat shock factor protein 2 (Hsf2) of Mus musculus (Mouse).